The following is a 156-amino-acid chain: Calglandulin (156 aa).

EF-hand domains are found at residues glutamate 8–asparagine 43, proline 44–lysine 79, asparagine 82–proline 117, and leucine 118–lysine 153. Positions 131, 133, 135, 137, and 142 each coordinate Ca(2+).

Belongs to the calmodulin family. Calglandulin subfamily. As to expression, expressed by the venom gland.

The protein localises to the cytoplasm. In terms of biological role, may be involved in the cellular control mechanism of the secretion of toxins from the gland into the venom. This is Calglandulin from Bothrops insularis (Golden lancehead).